Consider the following 781-residue polypeptide: Penicillin-binding protein 1B (781 aa).

The transglycosylase stretch occupies residues 151–322 (FRLAPKLIAM…SLYNPWRNPQ (172 aa)). The Proton donor; for transglycosylase activity role is filled by Glu-188. A transpeptidase region spans residues 415 to 702 (SQLQLKMKNP…ALQIYKDYLN (288 aa)). The active-site Acyl-ester intermediate; for transpeptidase activity is the Ser-466. Residues 749-768 (ETSSPSLTPTTETETPPQES) are compositionally biased toward low complexity. Residues 749-781 (ETSSPSLTPTTETETPPQESLWDVLDNPNPPAQ) are disordered.

The protein in the N-terminal section; belongs to the glycosyltransferase 51 family. This sequence in the C-terminal section; belongs to the transpeptidase family.

Its subcellular location is the cell inner membrane. It carries out the reaction [GlcNAc-(1-&gt;4)-Mur2Ac(oyl-L-Ala-gamma-D-Glu-L-Lys-D-Ala-D-Ala)](n)-di-trans,octa-cis-undecaprenyl diphosphate + beta-D-GlcNAc-(1-&gt;4)-Mur2Ac(oyl-L-Ala-gamma-D-Glu-L-Lys-D-Ala-D-Ala)-di-trans,octa-cis-undecaprenyl diphosphate = [GlcNAc-(1-&gt;4)-Mur2Ac(oyl-L-Ala-gamma-D-Glu-L-Lys-D-Ala-D-Ala)](n+1)-di-trans,octa-cis-undecaprenyl diphosphate + di-trans,octa-cis-undecaprenyl diphosphate + H(+). It catalyses the reaction Preferential cleavage: (Ac)2-L-Lys-D-Ala-|-D-Ala. Also transpeptidation of peptidyl-alanyl moieties that are N-acyl substituents of D-alanine.. It functions in the pathway cell wall biogenesis; peptidoglycan biosynthesis. Its function is as follows. Cell wall formation. Synthesis of cross-linked peptidoglycan from the lipid intermediates. The enzyme has a penicillin-insensitive transglycosylase N-terminal domain (formation of linear glycan strands) and a penicillin-sensitive transpeptidase C-terminal domain (cross-linking of the peptide subunits). This chain is Penicillin-binding protein 1B (mrcB), found in Haemophilus influenzae (strain ATCC 51907 / DSM 11121 / KW20 / Rd).